The chain runs to 121 residues: Small ribosomal subunit protein uS13 (121 aa).

Residues 95–121 (LPVRGQNTKNNARTRKGKAVAIAGKKK) form a disordered region. Basic residues predominate over residues 106–121 (ARTRKGKAVAIAGKKK).

It belongs to the universal ribosomal protein uS13 family. In terms of assembly, part of the 30S ribosomal subunit. Forms a loose heterodimer with protein S19. Forms two bridges to the 50S subunit in the 70S ribosome.

In terms of biological role, located at the top of the head of the 30S subunit, it contacts several helices of the 16S rRNA. In the 70S ribosome it contacts the 23S rRNA (bridge B1a) and protein L5 of the 50S subunit (bridge B1b), connecting the 2 subunits; these bridges are implicated in subunit movement. Contacts the tRNAs in the A and P-sites. In Streptococcus thermophilus (strain CNRZ 1066), this protein is Small ribosomal subunit protein uS13.